Here is an 88-residue protein sequence, read N- to C-terminus: UPF0297 protein Bcer98_3100 (88 aa).

This sequence belongs to the UPF0297 family.

This Bacillus cytotoxicus (strain DSM 22905 / CIP 110041 / 391-98 / NVH 391-98) protein is UPF0297 protein Bcer98_3100.